The sequence spans 323 residues: tRNA dimethylallyltransferase (323 aa).

12 to 19 (GPTAAGKT) serves as a coordination point for ATP. 14-19 (TAAGKT) is a binding site for substrate. 2 interaction with substrate tRNA regions span residues 37–40 (DSAL) and 161–165 (QRLIR).

The protein belongs to the IPP transferase family. As to quaternary structure, monomer. Requires Mg(2+) as cofactor.

The enzyme catalyses adenosine(37) in tRNA + dimethylallyl diphosphate = N(6)-dimethylallyladenosine(37) in tRNA + diphosphate. In terms of biological role, catalyzes the transfer of a dimethylallyl group onto the adenine at position 37 in tRNAs that read codons beginning with uridine, leading to the formation of N6-(dimethylallyl)adenosine (i(6)A). The protein is tRNA dimethylallyltransferase of Pseudomonas syringae pv. syringae (strain B728a).